The primary structure comprises 729 residues: Phosphoribosylformylglycinamidine synthase subunit PurL (729 aa).

His-54 is a catalytic residue. ATP is bound by residues Tyr-57 and Lys-96. Mg(2+) is bound at residue Glu-98. Substrate contacts are provided by residues 99-102 and Arg-121; that span reads SHNH. Residue His-100 is the Proton acceptor of the active site. Residue Asp-122 participates in Mg(2+) binding. Gln-245 provides a ligand contact to substrate. Asp-273 serves as a coordination point for Mg(2+). A substrate-binding site is contributed by 317 to 319; that stretch reads ETQ. ATP is bound by residues Asp-495 and Gly-532. Asn-533 contacts Mg(2+). Ser-535 lines the substrate pocket.

This sequence belongs to the FGAMS family. In terms of assembly, monomer. Part of the FGAM synthase complex composed of 1 PurL, 1 PurQ and 2 PurS subunits.

The protein localises to the cytoplasm. The catalysed reaction is N(2)-formyl-N(1)-(5-phospho-beta-D-ribosyl)glycinamide + L-glutamine + ATP + H2O = 2-formamido-N(1)-(5-O-phospho-beta-D-ribosyl)acetamidine + L-glutamate + ADP + phosphate + H(+). The protein operates within purine metabolism; IMP biosynthesis via de novo pathway; 5-amino-1-(5-phospho-D-ribosyl)imidazole from N(2)-formyl-N(1)-(5-phospho-D-ribosyl)glycinamide: step 1/2. Functionally, part of the phosphoribosylformylglycinamidine synthase complex involved in the purines biosynthetic pathway. Catalyzes the ATP-dependent conversion of formylglycinamide ribonucleotide (FGAR) and glutamine to yield formylglycinamidine ribonucleotide (FGAM) and glutamate. The FGAM synthase complex is composed of three subunits. PurQ produces an ammonia molecule by converting glutamine to glutamate. PurL transfers the ammonia molecule to FGAR to form FGAM in an ATP-dependent manner. PurS interacts with PurQ and PurL and is thought to assist in the transfer of the ammonia molecule from PurQ to PurL. The protein is Phosphoribosylformylglycinamidine synthase subunit PurL of Staphylococcus haemolyticus (strain JCSC1435).